Consider the following 293-residue polypeptide: 33 kDa chaperonin (293 aa).

2 cysteine pairs are disulfide-bonded: cysteine 236–cysteine 238 and cysteine 269–cysteine 272.

The protein belongs to the HSP33 family. Post-translationally, under oxidizing conditions two disulfide bonds are formed involving the reactive cysteines. Under reducing conditions zinc is bound to the reactive cysteines and the protein is inactive.

It is found in the cytoplasm. Functionally, redox regulated molecular chaperone. Protects both thermally unfolding and oxidatively damaged proteins from irreversible aggregation. Plays an important role in the bacterial defense system toward oxidative stress. In Lactobacillus delbrueckii subsp. bulgaricus (strain ATCC BAA-365 / Lb-18), this protein is 33 kDa chaperonin.